We begin with the raw amino-acid sequence, 431 residues long: MSKNVVVIGTQWGDEGKGKIVDWLTDHARAVVRFQGGHNAGHTLWVNGKKTVVRLVPSGILRPDVECFIGNGVVLSPEALLKEIDELEAAGVNASARLKIAEGCPLILPYHIALDQAREAAKGDAKIGTTGRGIGPCYEDKVARRALKVIDLFDPARFETKLKENVDYYNFLLTNLFKAEPVSYEAILADTMKMAERIKPMVADVSRTLYDLDKAGTPILFEGAQGTLLDIDHGTYPYVTSSNCVAGAAAPGAGVPPQMLNYVLGIVKGYATRVGSGPFPTEQENEIGAFLAKRGNEFGSVTGRPRRCGWFDAAALKRSIQINGVSGLCVMKLDVMDGLEEIKLCTGYMLDGQKVDILPFGSDAVTKCEPVYETLPGWTGTTVGVKRWEDLPANAQAYLKRIEEVCGAPVDIVSTGPDREETIVLRHPFGL.

GTP-binding positions include 13–19 (GDEGKGK) and 41–43 (GHT). Asp14 functions as the Proton acceptor in the catalytic mechanism. Mg(2+)-binding residues include Asp14 and Gly41. IMP-binding positions include 14–17 (DEGK), 39–42 (NAGH), Thr130, Arg144, Gln225, Thr240, and Arg304. His42 (proton donor) is an active-site residue. A substrate-binding site is contributed by 300-306 (SVTGRPR). GTP-binding positions include Arg306, 332–334 (KLD), and 414–416 (STG).

This sequence belongs to the adenylosuccinate synthetase family. In terms of assembly, homodimer. Mg(2+) is required as a cofactor.

The protein resides in the cytoplasm. It catalyses the reaction IMP + L-aspartate + GTP = N(6)-(1,2-dicarboxyethyl)-AMP + GDP + phosphate + 2 H(+). Its pathway is purine metabolism; AMP biosynthesis via de novo pathway; AMP from IMP: step 1/2. Plays an important role in the de novo pathway of purine nucleotide biosynthesis. Catalyzes the first committed step in the biosynthesis of AMP from IMP. This Chromobacterium violaceum (strain ATCC 12472 / DSM 30191 / JCM 1249 / CCUG 213 / NBRC 12614 / NCIMB 9131 / NCTC 9757 / MK) protein is Adenylosuccinate synthetase 2.